A 416-amino-acid polypeptide reads, in one-letter code: Serine protease inhibitor A3K (416 aa).

The signal sequence occupies residues 1–20; it reads MAFIAALGLLMAGICPAVLC. N102, N182, N220, and N267 each carry an N-linked (GlcNAc...) asparagine glycan. The RCL stretch occupies residues 365-392; sequence GTEGAAATAVTAALKSLPQTIPLLNFNR.

This sequence belongs to the serpin family. In terms of processing, N-glycosylated. Liver and plasma.

Its subcellular location is the secreted. Binds to and inhibits kallikreins. Inhibits trypsin but not chymotrypsin or elastase. This chain is Serine protease inhibitor A3K (Serpina3k), found in Rattus norvegicus (Rat).